We begin with the raw amino-acid sequence, 382 residues long: Anhydro-N-acetylmuramic acid kinase (382 aa).

Residue 9-16 (GTSLDGID) participates in ATP binding.

Belongs to the anhydro-N-acetylmuramic acid kinase family.

It carries out the reaction 1,6-anhydro-N-acetyl-beta-muramate + ATP + H2O = N-acetyl-D-muramate 6-phosphate + ADP + H(+). Its pathway is amino-sugar metabolism; 1,6-anhydro-N-acetylmuramate degradation. It participates in cell wall biogenesis; peptidoglycan recycling. Its function is as follows. Catalyzes the specific phosphorylation of 1,6-anhydro-N-acetylmuramic acid (anhMurNAc) with the simultaneous cleavage of the 1,6-anhydro ring, generating MurNAc-6-P. Is required for the utilization of anhMurNAc either imported from the medium or derived from its own cell wall murein, and thus plays a role in cell wall recycling. This is Anhydro-N-acetylmuramic acid kinase from Bacillus cereus (strain AH187).